The following is a 689-amino-acid chain: Glycine--tRNA ligase beta subunit (689 aa).

The protein belongs to the class-II aminoacyl-tRNA synthetase family. In terms of assembly, tetramer of two alpha and two beta subunits.

It localises to the cytoplasm. It carries out the reaction tRNA(Gly) + glycine + ATP = glycyl-tRNA(Gly) + AMP + diphosphate. This chain is Glycine--tRNA ligase beta subunit, found in Shigella flexneri serotype 5b (strain 8401).